We begin with the raw amino-acid sequence, 462 residues long: MHVAPTTELKALLRLAGPLIASQLAHMLMVLTDTLMMARISPQALAGGGLGAASYSFVSIFCLGVIAAVGTLVAIRKGANDIEGATRLAQNGLWLAWALALFAALVLWNLEPVLLLFGQKPENVASAAEFLTLLPLALPGYLTFMALRGFTSALGRSTPVMVISLFGTVLNYLFNVALIEGMFGLPKLGLMGIGLVTAVVSMGMATALALYIRWHPAYTAYPLRKGLSRPSLAALRELWRLGLPIGGTYMVEVGLFAFAALCMGVLGSTELAAHQIALQIVSTAFMVPTGLSYAVTMRVGLYYGAGNLLAARSAGRVGIGFGAMIMFAFATLFLLLPEALVGLFIDRNDPAFAAIFQVAVQLLMVAAWFELFDGMQTIAMGSIRGLKDAKTTFLIGLVCYWLVGAPSAWLFTFTLGGGAVGIWWGLALGLACAAVALTFGFEWRMKRLLGKAGVRTEAAVSA.

Helical transmembrane passes span 12–31 (LLRL…LMVL), 51–73 (GAAS…GTLV), 93–115 (LWLA…PVLL), 125–147 (ASAA…FMAL), 160–179 (VMVI…VALI), 189–211 (GLMG…LALY), 238–260 (LWRL…AFAA), 275–297 (QIAL…AVTM), 318–340 (GIGF…PEAL), 350–372 (PAFA…FELF), 393–415 (FLIG…TFTL), and 419–441 (AVGI…TFGF).

The protein belongs to the multi antimicrobial extrusion (MATE) (TC 2.A.66.1) family.

The protein localises to the cell inner membrane. Functionally, multidrug efflux pump. The polypeptide is Probable multidrug resistance protein NorM (norM) (Pseudomonas putida (strain ATCC 47054 / DSM 6125 / CFBP 8728 / NCIMB 11950 / KT2440)).